Reading from the N-terminus, the 72-residue chain is Large ribosomal subunit protein bL32 (72 aa).

It belongs to the bacterial ribosomal protein bL32 family.

This chain is Large ribosomal subunit protein bL32, found in Dehalococcoides mccartyi (strain ATCC BAA-2266 / KCTC 15142 / 195) (Dehalococcoides ethenogenes (strain 195)).